A 132-amino-acid chain; its full sequence is Small heat shock protein hspL (132 aa).

In terms of domain architecture, sHSP spans 15–131; the sequence is TFTNFVSAPV…VKMSNNNKVE (117 aa).

The protein belongs to the small heat shock protein (HSP20) family.

The protein is Small heat shock protein hspL (hspL) of Dictyostelium discoideum (Social amoeba).